Reading from the N-terminus, the 450-residue chain is Phosphoglucosamine mutase (450 aa).

Ser-103 functions as the Phosphoserine intermediate in the catalytic mechanism. Mg(2+) contacts are provided by Ser-103, Asp-243, Asp-245, and Asp-247. Ser-103 is subject to Phosphoserine.

Belongs to the phosphohexose mutase family. Mg(2+) is required as a cofactor. In terms of processing, activated by phosphorylation.

The enzyme catalyses alpha-D-glucosamine 1-phosphate = D-glucosamine 6-phosphate. Functionally, catalyzes the conversion of glucosamine-6-phosphate to glucosamine-1-phosphate. This chain is Phosphoglucosamine mutase, found in Lactobacillus helveticus (strain DPC 4571).